Here is a 502-residue protein sequence, read N- to C-terminus: uncharacterized protein (502 aa).

Residues 1 to 21 (MKIFLVFLSVFFFNGCFGLVY) form a helical membrane-spanning segment. 2 PLD phosphodiesterase domains span residues 162-189 (IKKRMHNKLFIVDNFAVIIGGRNIGDNY) and 396-423 (TKHSLHGKTIVFDDNLTLLGSFNIDPRS).

The protein belongs to the phospholipase D family. Cardiolipin synthase subfamily.

It localises to the cell membrane. This is an uncharacterized protein from Helicobacter pylori (strain ATCC 700392 / 26695) (Campylobacter pylori).